Here is a 559-residue protein sequence, read N- to C-terminus: Tissue-type plasminogen activator (559 aa).

A signal peptide spans 1 to 17; it reads MKGELLCVLLLCGVAFT. Positions 18-29 are excised as a propeptide; sequence LPDQGIHRRFRR. The propeptide at 30 to 32 is removed by plasmin; sequence GAR. The region spanning 36–78 is the Fibronectin type-I domain; the sequence is ATCRDEQTQTTYQQHQSWLRPMLRGNRVEYCRCNSGLAQCHSV. 17 cysteine pairs are disulfide-bonded: Cys-38–Cys-68, Cys-66–Cys-75, Cys-83–Cys-94, Cys-88–Cys-105, Cys-107–Cys-116, Cys-124–Cys-205, Cys-145–Cys-187, Cys-176–Cys-200, Cys-213–Cys-294, Cys-234–Cys-276, Cys-265–Cys-289, Cys-297–Cys-428, Cys-340–Cys-356, Cys-348–Cys-417, Cys-442–Cys-516, Cys-474–Cys-490, and Cys-506–Cys-534. The important for binding to annexin A2 stretch occupies residues 39 to 49; sequence RDEQTQTTYQQ. Positions 79 to 117 constitute an EGF-like domain; that stretch reads PVRSCSEPRCFNGGTCQQALYFSDFVCQCPDGFVGKRCD. Kringle domains lie at 124–205 and 213–294; these read CFEG…TPAC and CYVG…MSPC. Asn-149 carries N-linked (GlcNAc...) asparagine glycosylation. A Peptidase S1 domain is found at 309–558; the sequence is IKGGLFTDIT…YLNWIQDNMK (250 aa). Residues His-355 and Asp-404 each act as charge relay system in the active site. Asn-481 carries an N-linked (GlcNAc...) asparagine glycan. Residue Ser-510 is the Charge relay system of the active site.

This sequence belongs to the peptidase S1 family. In terms of assembly, heterodimer of chain A and chain B held by a disulfide bond. Binds to fibrin with high affinity. This interaction leads to an increase in the catalytic efficiency of the enzyme due to an increase in affinity for plasminogen. Similarly, binding to heparin increases the activation of plasminogen. Binds to annexin A2, cytokeratin-8, fibronectin and laminin. Binds to mannose receptor and the low-density lipoprotein receptor-related protein (LRP1); these proteins are involved in TPA clearance. Binds LRP1B; binding is followed by internalization and degradation. Forms heterodimer with SERPINA5. Interacts with SERPINE1. In complex with SERPINE1, interacts with SORL1. Post-translationally, the single chain, almost fully active enzyme, can be further processed into a two-chain fully active form by a cleavage after Arg-308 catalyzed by plasmin, tissue kallikrein or factor Xa.

The protein resides in the secreted. It is found in the extracellular space. The enzyme catalyses Specific cleavage of Arg-|-Val bond in plasminogen to form plasmin.. Its activity is regulated as follows. Inhibited by SERPINA5. Inhibited by SERPINE1. Functionally, converts the abundant, but inactive, zymogen plasminogen to plasmin by hydrolyzing a single Arg-Val bond in plasminogen. By controlling plasmin-mediated proteolysis, it plays an important role in tissue remodeling and degradation, in cell migration and many other physiopathological events. During oocyte activation, plays a role in cortical granule reaction in the zona reaction, which contributes to the block to polyspermy. This is Tissue-type plasminogen activator (Plat) from Rattus norvegicus (Rat).